Here is a 576-residue protein sequence, read N- to C-terminus: Arginine--tRNA ligase (576 aa).

Residues 123-133 (PNIGKEMHVGH) carry the 'HIGH' region motif.

This sequence belongs to the class-I aminoacyl-tRNA synthetase family. As to quaternary structure, monomer.

The protein localises to the cytoplasm. The enzyme catalyses tRNA(Arg) + L-arginine + ATP = L-arginyl-tRNA(Arg) + AMP + diphosphate. In Wigglesworthia glossinidia brevipalpis, this protein is Arginine--tRNA ligase.